Reading from the N-terminus, the 259-residue chain is Protein-L-isoaspartate O-methyltransferase 1 (259 aa).

S109 is a catalytic residue.

This sequence belongs to the methyltransferase superfamily. L-isoaspartyl/D-aspartyl protein methyltransferase family.

The protein localises to the cytoplasm. The enzyme catalyses [protein]-L-isoaspartate + S-adenosyl-L-methionine = [protein]-L-isoaspartate alpha-methyl ester + S-adenosyl-L-homocysteine. In terms of biological role, catalyzes the methyl esterification of L-isoaspartyl residues in peptides and proteins that result from spontaneous decomposition of normal L-aspartyl and L-asparaginyl residues. It plays a role in the repair and/or degradation of damaged proteins. The protein is Protein-L-isoaspartate O-methyltransferase 1 of Cupriavidus necator (strain ATCC 17699 / DSM 428 / KCTC 22496 / NCIMB 10442 / H16 / Stanier 337) (Ralstonia eutropha).